We begin with the raw amino-acid sequence, 375 residues long: Alanine racemase, catabolic (375 aa).

Lys38 serves as the catalytic Proton acceptor; specific for D-alanine. An N6-(pyridoxal phosphate)lysine modification is found at Lys38. The active-site Proton acceptor; specific for L-alanine is Tyr269.

This sequence belongs to the alanine racemase family. The cofactor is pyridoxal 5'-phosphate.

It catalyses the reaction L-alanine = D-alanine. It functions in the pathway amino-acid biosynthesis; D-alanine biosynthesis; D-alanine from L-alanine: step 1/1. This is Alanine racemase, catabolic (alr1) from Schizosaccharomyces pombe (strain 972 / ATCC 24843) (Fission yeast).